A 215-amino-acid polypeptide reads, in one-letter code: Ribonuclease T (215 aa).

The 175-residue stretch at 20-194 (VVIDVETAGF…YDTLQTAKLF (175 aa)) folds into the Exonuclease domain. Mg(2+)-binding residues include Asp-23, Glu-25, His-181, and Asp-186. His-181 acts as the Proton donor/acceptor in catalysis.

This sequence belongs to the RNase T family. Homodimer. Mg(2+) is required as a cofactor.

Functionally, trims short 3' overhangs of a variety of RNA species, leaving a one or two nucleotide 3' overhang. Responsible for the end-turnover of tRNA: specifically removes the terminal AMP residue from uncharged tRNA (tRNA-C-C-A). Also appears to be involved in tRNA biosynthesis. The sequence is that of Ribonuclease T from Yersinia pseudotuberculosis serotype I (strain IP32953).